Here is a 516-residue protein sequence, read N- to C-terminus: Maturase K (516 aa).

The protein belongs to the intron maturase 2 family. MatK subfamily.

It is found in the plastid. The protein resides in the chloroplast. Functionally, usually encoded in the trnK tRNA gene intron. Probably assists in splicing its own and other chloroplast group II introns. The chain is Maturase K from Cypripedium calceolus (Yellow lady's slipper).